Here is a 471-residue protein sequence, read N- to C-terminus: Zinc finger protein 385B (471 aa).

A required for induction of apoptosis region spans residues 1–93 (MNMANFLRGF…TGSTCHTTTL (93 aa)). Residues 34–64 (SFCEVCNIQLNSAAQAQVHSNGKSHRKRVKQ) form a Matrin-type 1 zinc finger. Disordered stretches follow at residues 50 to 92 (QVHS…HTTT) and 175 to 275 (HYKG…TVVE). The span at 76 to 92 (ASPSSNSSTGSTCHTTT) shows a compositional bias: low complexity. The tract at residues 94–471 (PALVRTPTLM…TPASILFAPY (378 aa)) is interaction with p53/TP53. A Matrin-type 2 zinc finger spans residues 157-187 (ISCNVCQLRFNSDSQAEAHYKGSKHAKKVKA). Polar residues predominate over residues 206–220 (ANPSCSITPITGNNS). Positions 230–250 (KASSSSQPSSSESGSFLLKSG) are enriched in low complexity. Residues 260–269 (TSPSKSTNGA) show a composition bias toward polar residues. The Matrin-type 3 zinc-finger motif lies at 282 to 316 (KKLLYCSLCKVAVNSLSQLEAHNTGSKHKTMVEAR). The segment at 318–340 (GAGPIKSYPRPGSRLKMQNGSKG) is disordered. The Matrin-type 4 zinc-finger motif lies at 348 to 378 (FHCEICDVHVNSEIQLKQHISSRRHKDRVAG).

As to quaternary structure, interacts with p53/TP53; the interaction is direct. In terms of tissue distribution, detected in germinal center of lymph node (at protein level). Expressed in spleen, lymph node and tonsil.

Its subcellular location is the nucleus. Functionally, may play a role in p53/TP53-mediated apoptosis. The chain is Zinc finger protein 385B (ZNF385B) from Homo sapiens (Human).